A 317-amino-acid chain; its full sequence is Petrobactin-binding protein YclQ (317 aa).

An N-terminal signal peptide occupies residues 1 to 19 (MKKFALLFIALVTAVVISA). Cys-20 is lipidated: N-palmitoyl cysteine. A lipid anchor (S-diacylglycerol cysteine) is attached at Cys-20. The region spanning 56–317 (KVVVFDFGSL…IKEVKDGLEK (262 aa)) is the Fe/B12 periplasmic-binding domain.

Belongs to the bacterial solute-binding protein 8 family. The complex is composed of two ATP-binding proteins (YclP), two transmembrane proteins (YclN and YclO) and a solute-binding protein (YclQ). Interacts with FloT.

The protein resides in the cell membrane. Its subcellular location is the membrane raft. Part of the ABC transporter complex YclNOPQ involved in uptake of ferric-petrobactin. Petrobactin is a photoreactive 3,4-catecholate siderophore produced by many members of the B.cereus group, including B.anthracis. Binds selectively iron-free and ferric petrobactin and the petrobactin precursor 3,4-dihydroxybenzoic acid (3,4-DHB). This chain is Petrobactin-binding protein YclQ (yclQ), found in Bacillus subtilis (strain 168).